The chain runs to 424 residues: Serine--tRNA ligase (424 aa).

Residue 230–232 (TAE) participates in L-serine binding. An ATP-binding site is contributed by 261–263 (RAE). Glutamate 284 is a binding site for L-serine. Position 348 to 351 (348 to 351 (EISS)) interacts with ATP. Serine 384 lines the L-serine pocket.

The protein belongs to the class-II aminoacyl-tRNA synthetase family. Type-1 seryl-tRNA synthetase subfamily. In terms of assembly, homodimer. The tRNA molecule binds across the dimer.

It localises to the cytoplasm. The catalysed reaction is tRNA(Ser) + L-serine + ATP = L-seryl-tRNA(Ser) + AMP + diphosphate + H(+). The enzyme catalyses tRNA(Sec) + L-serine + ATP = L-seryl-tRNA(Sec) + AMP + diphosphate + H(+). It participates in aminoacyl-tRNA biosynthesis; selenocysteinyl-tRNA(Sec) biosynthesis; L-seryl-tRNA(Sec) from L-serine and tRNA(Sec): step 1/1. Its function is as follows. Catalyzes the attachment of serine to tRNA(Ser). Is also able to aminoacylate tRNA(Sec) with serine, to form the misacylated tRNA L-seryl-tRNA(Sec), which will be further converted into selenocysteinyl-tRNA(Sec). In Desulforamulus reducens (strain ATCC BAA-1160 / DSM 100696 / MI-1) (Desulfotomaculum reducens), this protein is Serine--tRNA ligase.